We begin with the raw amino-acid sequence, 449 residues long: Probable aminotransferase TAT1 (449 aa).

A compositionally biased stretch (polar residues) spans 1-12; sequence MNHNSNLVLPSH. The tract at residues 1–20 is disordered; it reads MNHNSNLVLPSHQTETQTQD.

This sequence belongs to the class-I pyridoxal-phosphate-dependent aminotransferase family. Pyridoxal 5'-phosphate serves as cofactor.

The sequence is that of Probable aminotransferase TAT1 from Arabidopsis thaliana (Mouse-ear cress).